The primary structure comprises 717 residues: Polyribonucleotide nucleotidyltransferase (717 aa).

Aspartate 487 and aspartate 493 together coordinate Mg(2+). The 60-residue stretch at 554-613 (PKIITMAINPDKIRDVIGPSGKQINKIIEETGVKIDIEQDGTVFISSINQEMNEKAKKII) folds into the KH domain. Residues 623-691 (GEIYLGKVKR…KQGRVNLSRK (69 aa)) enclose the S1 motif domain.

This sequence belongs to the polyribonucleotide nucleotidyltransferase family. Mg(2+) is required as a cofactor.

Its subcellular location is the cytoplasm. It carries out the reaction RNA(n+1) + phosphate = RNA(n) + a ribonucleoside 5'-diphosphate. Functionally, involved in mRNA degradation. Catalyzes the phosphorolysis of single-stranded polyribonucleotides processively in the 3'- to 5'-direction. The sequence is that of Polyribonucleotide nucleotidyltransferase from Bacillus mycoides (strain KBAB4) (Bacillus weihenstephanensis).